The primary structure comprises 458 residues: Argininosuccinate lyase (458 aa).

This sequence belongs to the lyase 1 family. Argininosuccinate lyase subfamily.

It is found in the cytoplasm. It catalyses the reaction 2-(N(omega)-L-arginino)succinate = fumarate + L-arginine. It participates in amino-acid biosynthesis; L-arginine biosynthesis; L-arginine from L-ornithine and carbamoyl phosphate: step 3/3. The protein is Argininosuccinate lyase of Salmonella heidelberg (strain SL476).